A 238-amino-acid polypeptide reads, in one-letter code: Dolichyldiphosphatase 1 (238 aa).

The next 4 membrane-spanning stretches (helical) occupy residues 33-53 (LAYL…LIIF), 100-120 (PSSH…FLYL), 130-150 (FLDL…AFLV), and 162-182 (WSQV…WFIF).

The protein belongs to the dolichyldiphosphatase family.

The protein localises to the endoplasmic reticulum membrane. The catalysed reaction is a di-trans,poly-cis-dolichyl diphosphate + H2O = a di-trans,poly-cis-dolichyl phosphate + phosphate + H(+). It functions in the pathway protein modification; protein glycosylation. In terms of biological role, required for efficient N-glycosylation. Necessary for maintaining optimal levels of dolichol-linked oligosaccharides. Hydrolyzes dolichyl pyrophosphate at a very high rate and dolichyl monophosphate at a much lower rate. Does not act on phosphatidate. The sequence is that of Dolichyldiphosphatase 1 (DOLPP1) from Homo sapiens (Human).